The primary structure comprises 1976 residues: Myosin-10 (1976 aa).

At Arg-18 the chain carries Omega-N-methylarginine. In terms of domain architecture, Myosin N-terminal SH3-like spans 31 to 81 (TAKKLVWIPSERHGFEAASIKEERGDEVMVELAENGKKAMVNKDDIQKMNP). In terms of domain architecture, Myosin motor spans 85-783 (SKVEDMAELT…VLAHLEEERD (699 aa)). 178–185 (GESGAGKT) contacts ATP. Lys-442 bears the N6-acetyllysine mark. The actin-binding stretch occupies residues 661 to 683 (LTKLMATLRNTNPNFVRCIIPNH). Residues 786 to 815 (ITDIIIFFQAVCRGYLARKAFAKKQQQLSA) form the IQ domain. Residues 845–1976 (LQVTRQEEEL…VNETQPPQSE (1132 aa)) adopt a coiled-coil conformation. The disordered stretch occupies residues 1125 to 1175 (EDFESEKASRNKAEKQKRDLSEELEALKTELEDTLDTTAAQQELRTKREQE). Positions 1129–1155 (SEKASRNKAEKQKRDLSEELEALKTEL) are enriched in basic and acidic residues. The residue at position 1145 (Ser-1145) is a Phosphoserine. N6-acetyllysine occurs at positions 1241, 1301, and 1645. Disordered regions lie at residues 1697–1718 (ASSERARRHAEQERDELADEIA) and 1874–1976 (KANA…PQSE). The segment covering 1698-1708 (SSERARRHAEQ) has biased composition (basic and acidic residues). Residue Arg-1930 is modified to Omega-N-methylarginine. 4 positions are modified to phosphoserine: Ser-1935, Ser-1937, Ser-1938, and Ser-1939. Arg-1940 carries the omega-N-methylarginine modification. Residues Ser-1952 and Ser-1956 each carry the phosphoserine modification. Thr-1960 carries the post-translational modification Phosphothreonine. The span at 1967–1976 (VNETQPPQSE) shows a compositional bias: polar residues. Ser-1975 is modified (phosphoserine).

It belongs to the TRAFAC class myosin-kinesin ATPase superfamily. Myosin family. Myosin is a hexameric protein that consists of 2 heavy chain subunits (MHC), 2 alkali light chain subunits (MLC) and 2 regulatory light chain subunits (MLC-2). Interacts with PLEKHG6. Interacts with ECPAS. Interacts with KIF26B. Interacts with LARP6. Interacts with MCC. Interacts with CFAP95. In terms of processing, phosphorylated by ABL2.

Its subcellular location is the cell projection. It is found in the lamellipodium. In terms of biological role, involved with LARP6 in the stabilization of type I collagen mRNAs for CO1A1 and CO1A2. During cell spreading, plays an important role in cytoskeleton reorganization, focal contacts formation (in the central part but not the margins of spreading cells), and lamellipodial extension; this function is mechanically antagonized by MYH9. Cellular myosin that appears to play a role in cytokinesis, cell shape, and specialized functions such as secretion and capping. The sequence is that of Myosin-10 (Myh10) from Rattus norvegicus (Rat).